Consider the following 147-residue polypeptide: Large ribosomal subunit protein uL22 (147 aa).

A disordered region spans residues 110 to 147 (EEKKTVAKKAPAAKKTTTTKAPAKKTTSTKKATAKKES). Residues 117-140 (KKAPAAKKTTTTKAPAKKTTSTKK) are compositionally biased toward low complexity.

The protein belongs to the universal ribosomal protein uL22 family. Part of the 50S ribosomal subunit.

Its function is as follows. This protein binds specifically to 23S rRNA; its binding is stimulated by other ribosomal proteins, e.g. L4, L17, and L20. It is important during the early stages of 50S assembly. It makes multiple contacts with different domains of the 23S rRNA in the assembled 50S subunit and ribosome. The globular domain of the protein is located near the polypeptide exit tunnel on the outside of the subunit, while an extended beta-hairpin is found that lines the wall of the exit tunnel in the center of the 70S ribosome. In Campylobacter jejuni subsp. jejuni serotype O:23/36 (strain 81-176), this protein is Large ribosomal subunit protein uL22.